The chain runs to 129 residues: Fluoride-specific ion channel FluC 1 (129 aa).

Transmembrane regions (helical) follow at residues 43 to 63 (ASLL…PAWV), 68 to 88 (VVSL…TFSY), and 100 to 120 (LLAA…AALG). The Na(+) site is built by G78 and S81.

Belongs to the fluoride channel Fluc/FEX (TC 1.A.43) family.

It is found in the cell membrane. The catalysed reaction is fluoride(in) = fluoride(out). Its activity is regulated as follows. Na(+) is not transported, but it plays an essential structural role and its presence is essential for fluoride channel function. Functionally, fluoride-specific ion channel. Important for reducing fluoride concentration in the cell, thus reducing its toxicity. The sequence is that of Fluoride-specific ion channel FluC 1 from Frankia casuarinae (strain DSM 45818 / CECT 9043 / HFP020203 / CcI3).